Reading from the N-terminus, the 470-residue chain is Diaminobutyrate--2-oxoglutarate aminotransferase (470 aa).

K304 is modified (N6-(pyridoxal phosphate)lysine).

It belongs to the class-III pyridoxal-phosphate-dependent aminotransferase family. It depends on pyridoxal 5'-phosphate as a cofactor.

The enzyme catalyses L-2,4-diaminobutanoate + 2-oxoglutarate = L-aspartate 4-semialdehyde + L-glutamate. It functions in the pathway siderophore biosynthesis; rhizobactin biosynthesis. This chain is Diaminobutyrate--2-oxoglutarate aminotransferase (rhbA), found in Rhizobium meliloti (strain 1021) (Ensifer meliloti).